Here is a 473-residue protein sequence, read N- to C-terminus: MTKGRVTQIMGPVVDVKFDNGHLPAIYNALKISHKPSSASEVAIELTLEVAIHLGDNTVRTVAMSSTDGLVRGLEVEDTGAAISVPVGDVTLGRVFNVLGEKIDLDAPIDAGARRDPIHRQAPKFENLSTQAEILETGIKVVDLLAPYIKGGKIGLFGGAGVGKTVLIQELINNIAQEHGGISVFAGVGERTREGNDLYHEMTDSGVIKKTAMVFGQMNEPPGARQRVALTGLTMAEYFRDEQGQDVLFFIDNIFRFTQAGSEVSALLGRMPSAVGYQPTLATEMGQLQERITSTSVGSVTSIQAIYVPADDYTDPAPATTFAHLDATTNLERKLSEMGIYPAVDPLASTSRALSPEIVGEEHYAIARQVQQTLQRYKELQDIIAILGMDELSDEDKLVVQRARRVQFFLSQNFHVAEQFTGQKGSYVPVKETVKGFKEILEGKYDHLPEDAFRLVGRIEEVIENAKRMGVEV.

158 to 165 (GGAGVGKT) provides a ligand contact to ATP.

The protein belongs to the ATPase alpha/beta chains family. As to quaternary structure, F-type ATPases have 2 components, CF(1) - the catalytic core - and CF(0) - the membrane proton channel. CF(1) has five subunits: alpha(3), beta(3), gamma(1), delta(1), epsilon(1). CF(0) has three main subunits: a(1), b(2) and c(9-12). The alpha and beta chains form an alternating ring which encloses part of the gamma chain. CF(1) is attached to CF(0) by a central stalk formed by the gamma and epsilon chains, while a peripheral stalk is formed by the delta and b chains.

It localises to the cell membrane. The catalysed reaction is ATP + H2O + 4 H(+)(in) = ADP + phosphate + 5 H(+)(out). Its function is as follows. Produces ATP from ADP in the presence of a proton gradient across the membrane. The catalytic sites are hosted primarily by the beta subunits. The chain is ATP synthase subunit beta from Priestia megaterium (strain ATCC 12872 / QMB1551) (Bacillus megaterium).